The primary structure comprises 179 residues: Large ribosomal subunit protein uL5 (179 aa).

The protein belongs to the universal ribosomal protein uL5 family. As to quaternary structure, part of the 50S ribosomal subunit; part of the 5S rRNA/L5/L18/L25 subcomplex. Contacts the 5S rRNA and the P site tRNA. Forms a bridge to the 30S subunit in the 70S ribosome.

Functionally, this is one of the proteins that bind and probably mediate the attachment of the 5S RNA into the large ribosomal subunit, where it forms part of the central protuberance. In the 70S ribosome it contacts protein S13 of the 30S subunit (bridge B1b), connecting the 2 subunits; this bridge is implicated in subunit movement. Contacts the P site tRNA; the 5S rRNA and some of its associated proteins might help stabilize positioning of ribosome-bound tRNAs. In Pseudomonas fluorescens (strain SBW25), this protein is Large ribosomal subunit protein uL5.